Here is a 264-residue protein sequence, read N- to C-terminus: S-adenosylmethionine decarboxylase proenzyme (264 aa).

Catalysis depends on Ser-112, which acts as the Schiff-base intermediate with substrate; via pyruvic acid. Ser-112 is subject to Pyruvic acid (Ser); by autocatalysis. Catalysis depends on His-117, which acts as the Proton acceptor; for processing activity. Residue Cys-140 is the Proton donor; for catalytic activity of the active site.

It belongs to the prokaryotic AdoMetDC family. Type 2 subfamily. In terms of assembly, heterooctamer of four alpha and four beta chains arranged as a tetramer of alpha/beta heterodimers. The cofactor is pyruvate. Is synthesized initially as an inactive proenzyme. Formation of the active enzyme involves a self-maturation process in which the active site pyruvoyl group is generated from an internal serine residue via an autocatalytic post-translational modification. Two non-identical subunits are generated from the proenzyme in this reaction, and the pyruvate is formed at the N-terminus of the alpha chain, which is derived from the carboxyl end of the proenzyme. The post-translation cleavage follows an unusual pathway, termed non-hydrolytic serinolysis, in which the side chain hydroxyl group of the serine supplies its oxygen atom to form the C-terminus of the beta chain, while the remainder of the serine residue undergoes an oxidative deamination to produce ammonia and the pyruvoyl group blocking the N-terminus of the alpha chain.

The enzyme catalyses S-adenosyl-L-methionine + H(+) = S-adenosyl 3-(methylsulfanyl)propylamine + CO2. It functions in the pathway amine and polyamine biosynthesis; S-adenosylmethioninamine biosynthesis; S-adenosylmethioninamine from S-adenosyl-L-methionine: step 1/1. Catalyzes the decarboxylation of S-adenosylmethionine to S-adenosylmethioninamine (dcAdoMet), the propylamine donor required for the synthesis of the polyamines spermine and spermidine from the diamine putrescine. The polypeptide is S-adenosylmethionine decarboxylase proenzyme (Hamiltonella defensa subsp. Acyrthosiphon pisum (strain 5AT)).